We begin with the raw amino-acid sequence, 485 residues long: Probable cytosol aminopeptidase (485 aa).

2 residues coordinate Mn(2+): lysine 251 and aspartate 256. The active site involves lysine 263. Positions 274, 333, and 335 each coordinate Mn(2+). Residue arginine 337 is part of the active site.

Belongs to the peptidase M17 family. It depends on Mn(2+) as a cofactor.

The protein resides in the cytoplasm. The enzyme catalyses Release of an N-terminal amino acid, Xaa-|-Yaa-, in which Xaa is preferably Leu, but may be other amino acids including Pro although not Arg or Lys, and Yaa may be Pro. Amino acid amides and methyl esters are also readily hydrolyzed, but rates on arylamides are exceedingly low.. It carries out the reaction Release of an N-terminal amino acid, preferentially leucine, but not glutamic or aspartic acids.. Functionally, presumably involved in the processing and regular turnover of intracellular proteins. Catalyzes the removal of unsubstituted N-terminal amino acids from various peptides. In Brucella melitensis biotype 1 (strain ATCC 23456 / CCUG 17765 / NCTC 10094 / 16M), this protein is Probable cytosol aminopeptidase.